The chain runs to 249 residues: SRR1-like protein (249 aa).

The tract at residues 1-40 (MAAAALEPWSAVAPRRRKRAAGRRPRPGEGPRAEPEADGE) is disordered. The span at 14-25 (PRRRKRAAGRRP) shows a compositional bias: basic residues. Over residues 26 to 40 (RPGEGPRAEPEADGE) the composition is skewed to basic and acidic residues.

This sequence belongs to the SRR1 family.

Its subcellular location is the cytoplasm. Its function is as follows. Plays a role in the regulation of heme biosynthesis and in the regulation of the expression of core clock genes. This Mus musculus (Mouse) protein is SRR1-like protein (Srrd).